The following is a 398-amino-acid chain: Cobalamin import ATP-binding protein BtuD (398 aa).

The 235-residue stretch at 3-237 folds into the ABC transporter domain; the sequence is LDVTGLDVEL…DTIRAAFDAR (235 aa). 35–42 provides a ligand contact to ATP; the sequence is GPNGAGKS.

This sequence belongs to the ABC transporter superfamily. In terms of assembly, the complex is composed of two ATP-binding proteins (BtuD), two transmembrane proteins (BtuC) and a solute-binding protein (BtuF).

Its subcellular location is the cell membrane. It catalyses the reaction an R-cob(III)alamin(out) + ATP + H2O = an R-cob(III)alamin(in) + ADP + phosphate + H(+). Functionally, required for corrinoid utilization. Probably part of the ABC transporter complex BtuCDF involved in cobalamin (vitamin B12) import. Probably responsible for energy coupling to the transport system. In Halobacterium salinarum (strain ATCC 29341 / DSM 671 / R1), this protein is Cobalamin import ATP-binding protein BtuD (btuD).